The chain runs to 186 residues: Elongation factor P (186 aa).

It belongs to the elongation factor P family.

It localises to the cytoplasm. It functions in the pathway protein biosynthesis; polypeptide chain elongation. Functionally, involved in peptide bond synthesis. Stimulates efficient translation and peptide-bond synthesis on native or reconstituted 70S ribosomes in vitro. Probably functions indirectly by altering the affinity of the ribosome for aminoacyl-tRNA, thus increasing their reactivity as acceptors for peptidyl transferase. This Polynucleobacter asymbioticus (strain DSM 18221 / CIP 109841 / QLW-P1DMWA-1) (Polynucleobacter necessarius subsp. asymbioticus) protein is Elongation factor P.